The chain runs to 247 residues: Coiled-coil domain-containing protein 124 homolog (247 aa).

A disordered region spans residues 1 to 146 (MGGKKFGTNS…TTTTGSDDHE (146 aa)). Positions 8–85 (TNSKAEEARS…QEDKEIKERY (78 aa)) form a coiled coil. The segment covering 11-114 (KAEEARSKKA…EQKQREKELA (104 aa)) has biased composition (basic and acidic residues). A compositionally biased stretch (low complexity) spans 122-140 (VVVVPTTTTTTTTTTTTTT).

Belongs to the CCDC124 family. As to quaternary structure, associates with translationally inactive ribosomes in the nonrotated state.

Functionally, ribosome-binding protein involved in ribosome hibernation: associates with translationally inactive ribosomes and stabilizes the nonrotated conformation of the 80S ribosome, thereby promoting ribosome preservation and storage. This chain is Coiled-coil domain-containing protein 124 homolog, found in Dictyostelium discoideum (Social amoeba).